The chain runs to 217 residues: Ribonuclease T (217 aa).

Positions 20-195 (VVVDVETAGF…YDTEKTAELF (176 aa)) constitute an Exonuclease domain. The Mg(2+) site is built by Asp-23, Glu-25, His-182, and Asp-187. Catalysis depends on His-182, which acts as the Proton donor/acceptor.

The protein belongs to the RNase T family. Homodimer. It depends on Mg(2+) as a cofactor.

Trims short 3' overhangs of a variety of RNA species, leaving a one or two nucleotide 3' overhang. Responsible for the end-turnover of tRNA: specifically removes the terminal AMP residue from uncharged tRNA (tRNA-C-C-A). Also appears to be involved in tRNA biosynthesis. In Vibrio vulnificus (strain YJ016), this protein is Ribonuclease T.